A 222-amino-acid chain; its full sequence is Global nitrogen regulator (222 aa).

6-128 (NSLLTMFREL…NVMLQGLSSR (123 aa)) serves as a coordination point for a nucleoside 3',5'-cyclic phosphate. An HTH crp-type domain is found at 142–215 (RDMGSRLVSF…KKRITVFNPV (74 aa)). Residues 175–194 (HQAIAEAIGSTRVTVTRLLG) constitute a DNA-binding region (H-T-H motif).

Required for full expression of proteins subject to ammonium repression. Transcriptional activator of genes subject to nitrogen control. This chain is Global nitrogen regulator (ntcA), found in Synechococcus elongatus (strain ATCC 33912 / PCC 7942 / FACHB-805) (Anacystis nidulans R2).